The following is a 174-amino-acid chain: UPF0340 protein SAHV_2098 (174 aa).

Belongs to the UPF0340 family.

The chain is UPF0340 protein SAHV_2098 from Staphylococcus aureus (strain Mu3 / ATCC 700698).